An 87-amino-acid chain; its full sequence is UPF0147 protein AF_2370.1 (87 aa).

It belongs to the UPF0147 family.

The protein is UPF0147 protein AF_2370.1 of Archaeoglobus fulgidus (strain ATCC 49558 / DSM 4304 / JCM 9628 / NBRC 100126 / VC-16).